The sequence spans 223 residues: 7-cyano-7-deazaguanine synthase (223 aa).

15-25 (FSGGQDSTTCL) contacts ATP. Residues Cys191, Cys200, Cys203, and Cys206 each contribute to the Zn(2+) site.

This sequence belongs to the QueC family. As to quaternary structure, homodimer. Requires Zn(2+) as cofactor.

It carries out the reaction 7-carboxy-7-deazaguanine + NH4(+) + ATP = 7-cyano-7-deazaguanine + ADP + phosphate + H2O + H(+). It functions in the pathway purine metabolism; 7-cyano-7-deazaguanine biosynthesis. Functionally, catalyzes the ATP-dependent conversion of 7-carboxy-7-deazaguanine (CDG) to 7-cyano-7-deazaguanine (preQ(0)). In Staphylococcus haemolyticus (strain JCSC1435), this protein is 7-cyano-7-deazaguanine synthase.